The following is a 446-amino-acid chain: Glutamate--tRNA ligase (446 aa).

Positions 9–19 (PSPTGLLHVGN) match the 'HIGH' region motif. A 'KMSKS' region motif is present at residues 240–244 (GLSKR). Residue K243 participates in ATP binding.

The protein belongs to the class-I aminoacyl-tRNA synthetase family. Glutamate--tRNA ligase type 1 subfamily. Monomer.

Its subcellular location is the cytoplasm. The enzyme catalyses tRNA(Glu) + L-glutamate + ATP = L-glutamyl-tRNA(Glu) + AMP + diphosphate. In terms of biological role, catalyzes the attachment of glutamate to tRNA(Glu) in a two-step reaction: glutamate is first activated by ATP to form Glu-AMP and then transferred to the acceptor end of tRNA(Glu). The sequence is that of Glutamate--tRNA ligase from Azospirillum brasilense.